A 558-amino-acid chain; its full sequence is UvrABC system protein C (558 aa).

The region spanning 12 to 92 is the GIY-YIG domain; sequence LLPGVYIFYG…IFNHKPKYNV (81 aa). The region spanning 200-235 is the UVR domain; the sequence is SETLDLIEEKMKKHAKMMDFENAAKYRDLLVKFENV.

This sequence belongs to the UvrC family. As to quaternary structure, interacts with UvrB in an incision complex.

The protein localises to the cytoplasm. The UvrABC repair system catalyzes the recognition and processing of DNA lesions. UvrC both incises the 5' and 3' sides of the lesion. The N-terminal half is responsible for the 3' incision and the C-terminal half is responsible for the 5' incision. This chain is UvrABC system protein C, found in Pseudothermotoga lettingae (strain ATCC BAA-301 / DSM 14385 / NBRC 107922 / TMO) (Thermotoga lettingae).